The chain runs to 111 residues: MEVTAKLKGAPLSAQKGRLVADMIRNMNVSGALDVLKFTPKKGAKLMLKLLESAIANAENNNGADIDDLKVGMVCVDEATTLKRISPRAKGRANRICKRTCHITIKVSDEE.

The protein belongs to the universal ribosomal protein uL22 family. As to quaternary structure, part of the 50S ribosomal subunit.

This protein binds specifically to 23S rRNA; its binding is stimulated by other ribosomal proteins, e.g. L4, L17, and L20. It is important during the early stages of 50S assembly. It makes multiple contacts with different domains of the 23S rRNA in the assembled 50S subunit and ribosome. Functionally, the globular domain of the protein is located near the polypeptide exit tunnel on the outside of the subunit, while an extended beta-hairpin is found that lines the wall of the exit tunnel in the center of the 70S ribosome. This Legionella pneumophila (strain Lens) protein is Large ribosomal subunit protein uL22.